We begin with the raw amino-acid sequence, 100 residues long: MKFSKLSITLAVILTQAVFVLCGMKNEDFMEKGLESNELHDAIKKPVNSGKPDTERLLDCVLSRVCSPDANCCGLTPICKMGLCVPKVGGLLGGLLGGIL.

The N-terminal stretch at methionine 1–glycine 23 is a signal peptide. Positions methionine 24–glutamate 55 are excised as a propeptide. Cystine bridges form between cysteine 60–cysteine 73, cysteine 66–cysteine 79, and cysteine 72–cysteine 84.

Belongs to the neurotoxin 15 family. 02 (omega-actx) subfamily. Expressed by the venom gland.

It localises to the secreted. Potent inhibitor of insect, but not mammalian, voltage-gated calcium channels (Cav). The sequence is that of Omega-hexatoxin-Asp2a from Atrax sp. (strain Illawarra) (Funnel-web spider).